The chain runs to 314 residues: Carbamate kinase (314 aa).

This sequence belongs to the carbamate kinase family.

It is found in the cytoplasm. It carries out the reaction hydrogencarbonate + NH4(+) + ATP = carbamoyl phosphate + ADP + H2O + H(+). It participates in metabolic intermediate metabolism; carbamoyl phosphate degradation; CO(2) and NH(3) from carbamoyl phosphate: step 1/1. The polypeptide is Carbamate kinase (arcC) (Latilactobacillus sakei (Lactobacillus sakei)).